The chain runs to 290 residues: MSSEVETAEAVDESEKNSMASEKENHSKIADFSDLLKEGTKEADDRAENTQFVKDFLKGNIKKELFKLATTALSYSAPEEEMDSLTKDMEYFFGENWEEKVKCSEAAQTYVDQIHYVGQNEPEHLVAHTYSTYMGGNLSGDQVLKKETQPVPFTREGTQFYLFEHVDNAKQFKLFYCARLNALDLNLKTKERIVEEATKAFEYNMQIFSELDQAGSIPVRETLKNGLSILDGKGGVCKCPFNAAQPDKGTLGGSNCPFQMSMALLRKPNLQLILVASMALVAGLLAWYYM.

Residues 1–12 (MSSEVETAEAVD) show a composition bias toward acidic residues. Residues 1 to 33 (MSSEVETAEAVDESEKNSMASEKENHSKIADFS) form a disordered region. Residues 13-33 (ESEKNSMASEKENHSKIADFS) are compositionally biased toward basic and acidic residues. HRM repeat units follow at residues 238–243 (KCPFNA) and 255–260 (NCPFQM).

This sequence belongs to the heme oxygenase family. In terms of tissue distribution, found in the spleen, liver, thymus, prostate, heart, kidney, brain and testis.

The catalysed reaction is heme b + 3 reduced [NADPH--hemoprotein reductase] + 3 O2 = biliverdin IXalpha + CO + Fe(2+) + 3 oxidized [NADPH--hemoprotein reductase] + 3 H2O + H(+). Heme oxygenase cleaves the heme ring at the alpha methene bridge to form biliverdin. Biliverdin is subsequently converted to bilirubin by biliverdin reductase. Heme oxygenase 3 could be implicated in some heme-dependent regulatory role in the cell. The sequence is that of Putative heme oxygenase 3 (Hmox3) from Rattus norvegicus (Rat).